The following is an 84-amino-acid chain: Small ribosomal subunit protein uS17 (84 aa).

This sequence belongs to the universal ribosomal protein uS17 family. In terms of assembly, part of the 30S ribosomal subunit.

Its function is as follows. One of the primary rRNA binding proteins, it binds specifically to the 5'-end of 16S ribosomal RNA. In Clostridium acetobutylicum (strain ATCC 824 / DSM 792 / JCM 1419 / IAM 19013 / LMG 5710 / NBRC 13948 / NRRL B-527 / VKM B-1787 / 2291 / W), this protein is Small ribosomal subunit protein uS17.